An 894-amino-acid polypeptide reads, in one-letter code: Alanine--tRNA ligase (894 aa).

The protein belongs to the class-II aminoacyl-tRNA synthetase family.

Its subcellular location is the cytoplasm. The enzyme catalyses tRNA(Ala) + L-alanine + ATP = L-alanyl-tRNA(Ala) + AMP + diphosphate. In terms of biological role, catalyzes the attachment of alanine to tRNA(Ala) in a two-step reaction: alanine is first activated by ATP to form Ala-AMP and then transferred to the acceptor end of tRNA(Ala). Also edits incorrectly charged Ser-tRNA(Ala) and Gly-tRNA(Ala) via its editing domain. The chain is Alanine--tRNA ligase (alaS) from Leuconostoc citreum (strain KM20).